The sequence spans 166 residues: Heavy metal-associated isoprenylated plant protein 45 (166 aa).

Positions 15-78 (LSIVELLVDM…MVKRTGRTAE (64 aa)) constitute an HMA domain. Residues C26 and C29 each contribute to the a metal cation site. At C163 the chain carries Cysteine methyl ester. The S-farnesyl cysteine moiety is linked to residue C163. The propeptide at 164-166 (TIM) is removed in mature form.

The protein belongs to the HIPP family.

Functionally, heavy-metal-binding protein. This Arabidopsis thaliana (Mouse-ear cress) protein is Heavy metal-associated isoprenylated plant protein 45.